The chain runs to 393 residues: NAD(P)H-quinone oxidoreductase subunit H, chloroplastic (393 aa).

Belongs to the complex I 49 kDa subunit family. In terms of assembly, NDH is composed of at least 16 different subunits, 5 of which are encoded in the nucleus.

The protein resides in the plastid. It localises to the chloroplast thylakoid membrane. The catalysed reaction is a plastoquinone + NADH + (n+1) H(+)(in) = a plastoquinol + NAD(+) + n H(+)(out). The enzyme catalyses a plastoquinone + NADPH + (n+1) H(+)(in) = a plastoquinol + NADP(+) + n H(+)(out). In terms of biological role, NDH shuttles electrons from NAD(P)H:plastoquinone, via FMN and iron-sulfur (Fe-S) centers, to quinones in the photosynthetic chain and possibly in a chloroplast respiratory chain. The immediate electron acceptor for the enzyme in this species is believed to be plastoquinone. Couples the redox reaction to proton translocation, and thus conserves the redox energy in a proton gradient. This is NAD(P)H-quinone oxidoreductase subunit H, chloroplastic from Olimarabidopsis pumila (Dwarf rocket).